The chain runs to 2424 residues: Voltage-dependent P/Q-type calcium channel subunit alpha-1A (2424 aa).

Residues 1–98 (MARFGDEMPA…KYAKKITEWP (98 aa)) lie on the Cytoplasmic side of the membrane. The I repeat unit spans residues 85–363 (NVVRKYAKKI…LVLGVLSGEF (279 aa)). Residues 99–117 (PFEYMILATIIANCIVLAL) form a helical membrane-spanning segment. The Extracellular portion of the chain corresponds to 118 to 135 (EQHLPDDDKTPMSERLDD). The helical transmembrane segment at 136 to 155 (TEPYFIGIFCFEAGIKIIAL) threads the bilayer. The Cytoplasmic portion of the chain corresponds to 156–167 (GFAFHKGSYLRN). A helical membrane pass occupies residues 168–185 (GWNVMDFVVVLTGILATV). Over 186–190 (GTEFD) the chain is Extracellular. Residues 191-209 (LRTLRAVRVLRPLKLVSGI) form a helical membrane-spanning segment. Residues 210 to 228 (PSLQVVLKSIMKAMIPLLQ) lie on the Cytoplasmic side of the membrane. Residues 229–248 (IGLLLFFAILIFAIIGLEFY) form a helical membrane-spanning segment. Topologically, residues 249–335 (MGKFHTTCFE…NSNDASGNTW (87 aa)) are extracellular. Residue N283 is glycosylated (N-linked (GlcNAc...) asparagine). Residue E318 participates in Ca(2+) binding. The helical transmembrane segment at 336 to 360 (NWLYFIPLIIIGSFFMLNLVLGVLS) threads the bilayer. Topologically, residues 361–487 (GEFAKERERV…FYIRRMVKTQ (127 aa)) are cytoplasmic. The tract at residues 383–400 (QQIERELNGYMEWISKAE) is binding to the beta subunit. T409 carries the post-translational modification Phosphothreonine. Residues S448 and S451 each carry the phosphoserine modification. An II repeat occupies 473–717 (ERRMRFYIRR…VFLAIAVDNL (245 aa)). A helical transmembrane segment spans residues 488–506 (AFYWTVLSLVALNTLCVAI). Topologically, residues 507 to 521 (VHYNQPEWLSDFLYY) are extracellular. The helical transmembrane segment at 522–541 (AEFIFLGLFMSEMFIKMYGL) threads the bilayer. Residues 542 to 549 (GTRPYFHS) lie on the Cytoplasmic side of the membrane. The helical transmembrane segment at 550–568 (SFNCFDCGVIIGSIFEVIW) threads the bilayer. At 569–578 (AVIKPGTSFG) the chain is on the extracellular side. Residues 579–597 (ISVLRALRLLRIFKVTKYW) form a helical membrane-spanning segment. Residues 598 to 616 (ASLRNLVVSLLNSMKSIIS) lie on the Cytoplasmic side of the membrane. A helical membrane pass occupies residues 617 to 636 (LLFLLFLFIVVFALLGMQLF). Residues 637–689 (GGQFNFDEGTPPTNFDTFPAAIMTVFQILTGEDWNEVMYDGIKSQGGVQGGMV) are Extracellular-facing. E668 is a binding site for Ca(2+). A helical transmembrane segment spans residues 690–714 (FSIYFIVLTLFGNYTLLNVFLAIAV). The Cytoplasmic segment spans residues 715 to 1253 (DNLANAQELT…RLCHYILNLR (539 aa)). Phosphoserine is present on residues S750, S753, and S790. A disordered region spans residues 819–1229 (HLDRPLVVDP…GEDGPKPMPP (411 aa)). 3 stretches are compositionally biased toward basic and acidic residues: residues 893-912 (ELSR…REGG), 922-931 (EAERGKAGDP), and 969-996 (RPGE…RSGE). Positions 1053–1065 (PNLSTTRPIQQDL) are enriched in polar residues. Phosphoserine is present on residues S1091 and S1104. Over residues 1110–1140 (SSTDPAGPTPATAANPQNSTASRRTPNNPGN) the composition is skewed to low complexity. Polar residues predominate over residues 1151–1168 (ENSLIVTNPSTAQTNSAK). The segment covering 1204-1214 (LPKKEDEKKEE) has biased composition (basic and acidic residues). The stretch at 1240 to 1523 (NPLRRLCHYI…IFVALIIITF (284 aa)) is one III repeat. Residues 1254-1272 (YFEMCILMVIAMSSIALAA) form a helical membrane-spanning segment. The Extracellular segment spans residues 1273–1288 (EDPVQPNAPRNNVLRY). A helical transmembrane segment spans residues 1289–1308 (FDYVFTGVFTFEMVIKMIDL). At 1309-1320 (GLVLHQGAYFRD) the chain is on the cytoplasmic side. A helical membrane pass occupies residues 1321–1339 (LWNILDFIVVSGALVAFAF). Residues 1340–1350 (TGNSKGKDINT) are Extracellular-facing. The chain crosses the membrane as a helical span at residues 1351–1369 (IKSLRVLRVLRPLKTIKRL). The Cytoplasmic segment spans residues 1370–1388 (PKLKAVFDCVVNSLKNVFN). A helical membrane pass occupies residues 1389 to 1408 (ILIVYMLFMFIFAVVAVQLF). The Extracellular portion of the chain corresponds to 1409-1495 (KGKFFHCTDE…QGPSPGYRME (87 aa)). E1469 serves as a coordination point for Ca(2+). A helical transmembrane segment spans residues 1496–1520 (MSIFYVVYFVVFPFFFVNIFVALII). The Cytoplasmic segment spans residues 1521-1575 (ITFQEQGDKMMEEYSLEKNERACIDFAISAKPLTRHMPQNKQSFQYRMWQFVVSP). Residues 1560–1823 (NKQSFQYRMW…LFVAVIMDNF (264 aa)) form an IV repeat. A helical membrane pass occupies residues 1576 to 1604 (PFEYTIMAMIALNTIVLMMKFYGASVAYD). Over 1605–1609 (NALKV) the chain is Extracellular. Residues 1610-1629 (FNIVFTSLFSLECLLKVLAF) traverse the membrane as a helical segment. At 1630-1637 (GILNYFRD) the chain is on the cytoplasmic side. A helical membrane pass occupies residues 1638-1656 (AWNIFDFVTVLGSITDILV). The Extracellular portion of the chain corresponds to 1657 to 1665 (TEFGNNFIN). Residue N1665 is glycosylated (N-linked (GlcNAc...) asparagine). The chain crosses the membrane as a helical span at residues 1666 to 1684 (LSFLRLFRAARLIKLLRQG). The Cytoplasmic segment spans residues 1685–1703 (YTIRILLWTFVQSFKALPY). A helical membrane pass occupies residues 1704–1723 (VCLLIAMLFFIYAIIGMQVF). The Extracellular portion of the chain corresponds to 1724-1795 (GNIGIDMEDE…ILTPECGNEF (72 aa)). A helical transmembrane segment spans residues 1796-1820 (AYFYFVSFIFLCSFLMLNLFVAVIM). At 1821–2424 (DNFEYLTRDS…GGPRASAPSP (604 aa)) the chain is on the cytoplasmic side. At T1993 the chain carries Phosphothreonine. Residues 1997-2424 (FQRMEPPPDE…GGPRASAPSP (428 aa)) are disordered. Over residues 2037–2053 (SWVTQRAQEMFQKTGTW) the composition is skewed to polar residues. Phosphoserine occurs at positions 2054, 2072, 2084, 2086, 2127, and 2148. A compositionally biased stretch (basic and acidic residues) spans 2074-2090 (EMREMSQDGYSDSEHCL). 2 stretches are compositionally biased toward basic and acidic residues: residues 2142 to 2159 (RRLD…ENQR) and 2200 to 2210 (PSREREQERGR). Basic residues predominate over residues 2211-2229 (PKDRKHRPHHHHHHHHHPG). The segment covering 2249–2262 (VARVRPARAPALAH) has biased composition (low complexity). Basic residues predominate over residues 2280–2305 (RRARRPRPRQRRRPRRRRGGGGRALR).

Belongs to the calcium channel alpha-1 subunit (TC 1.A.1.11) family. CACNA1A subfamily. In terms of assembly, voltage-dependent calcium channels are multisubunit complexes, consisting of alpha-1, alpha-2, beta and delta subunits in a 1:1:1:1 ratio. The channel activity is directed by the pore-forming and voltage-sensitive alpha-1 subunit. In many cases, this subunit is sufficient to generate voltage-sensitive calcium channel activity. The auxiliary subunits beta and alpha-2/delta linked by a disulfide bridge regulate the channel activity. Interacts with CABP1. Interacts with the spider omega-agatoxin-IVA (AC P30288). Interacts with TSPOAP1. Brain specific. Purkinje cells contain predominantly P-type VSCC, the Q-type being a prominent calcium current in cerebellar granule cells.

The protein resides in the cell membrane. It catalyses the reaction Ca(2+)(in) = Ca(2+)(out). In terms of biological role, voltage-sensitive calcium channels (VSCC) mediate the entry of calcium ions into excitable cells and are also involved in a variety of calcium-dependent processes, including muscle contraction, hormone or neurotransmitter release, gene expression, cell motility, cell division and cell death. The isoform alpha-1A gives rise to P and/or Q-type calcium currents. P/Q-type calcium channels belong to the 'high-voltage activated' (HVA) group and are specifically blocked by the spider omega-agatoxin-IVA (AC P54282). They are however insensitive to dihydropyridines (DHP). This is Voltage-dependent P/Q-type calcium channel subunit alpha-1A (CACNA1A) from Oryctolagus cuniculus (Rabbit).